The primary structure comprises 513 residues: Pleiotropic regulator 1 (513 aa).

Met-1 carries the post-translational modification N-acetylmethionine. Residues 60-79 (TSKENLKEKGPQNATDSYPH) form a disordered region. Ser-119 carries the phosphoserine modification. The segment at 136 to 160 (VDANRTGPAGSEYRHPGASDRSQPT) is disordered. Ser-200 is modified (phosphoserine). WD repeat units lie at residues 201–240 (GHLG…LKLS), 243–282 (GHIS…VIRH), 285–324 (GHLS…SVHT), 327–366 (GHTN…TRVT), 369–409 (NHKK…QNLS), 410–448 (GHNA…NFQR), and 459–498 (DSES…TEET). Ser-390 bears the Phosphoserine mark.

Belongs to the WD repeat PRL1/PRL2 family. In terms of assembly, identified in the spliceosome C complex. Component of the PRP19-CDC5L splicing complex composed of a core complex comprising a homotetramer of PRPF19, CDC5L, PLRG1 and BCAS2, and at least three less stably associated proteins CTNNBL1, CWC15 and HSPA8. Interacts (via its WD40 repeat domain) directly with CDC5L (via its C-terminal); the interaction is required for mRNA splicing but not for spliceosome assembly. Component of the minor spliceosome, which splices U12-type introns. Within this complex, interacts with CRIPT. Also interacts directly in the complex with BCAS2 and PRPF19. Interacts with USB1.

It localises to the nucleus. Its subcellular location is the nucleus speckle. Involved in pre-mRNA splicing as component of the spliceosome. Component of the PRP19-CDC5L complex that forms an integral part of the spliceosome and is required for activating pre-mRNA splicing. As a component of the minor spliceosome, involved in the splicing of U12-type introns in pre-mRNAs. The chain is Pleiotropic regulator 1 (Plrg1) from Mus musculus (Mouse).